The following is a 466-amino-acid chain: SVGFKAGVKDYKLNYYTPEYTPKDTDTLAAFRVTPQPGVPPEEAGAAVAAESSTGTWTTVWTDGLTSLDRYKGRCYHIEPVAGEENQYICYVAYPLDLFEEGSVTNMFTSIVGNVFGFKALRALRLEDLRIPVAYVKTFQGPPHGIQVERDKLNKYGRPLLGCTIKPKLGLSAKNYGRAVYECLRGGLDFTKDDENVNSQPFMRWRDRFLFCAEALYKAQAETGEIKGHYLNATAGTCEEMIKRAVFARELGVPIVMHDYLTGGFTANTSLAHYCRDNGLLLHIHRAMHAVIDRQKNHGIHFRVLAKALRMSGGDHIHSGTVVGKLEGEREITLGFVDLLRDDFIEKDRSRGIYFTQDWVSLPGVLPVASGGIHVWHMPALTEIFGDDSVLQFGGGTLGHPWGNRPGAVANRVALEACVQARNEGRDLAREGNEIIREACKWSLELAAACEVWKEIKFEFEAMDTL.

Residue Lys-5 is modified to N6,N6,N6-trimethyllysine. Substrate is bound by residues Asn-114 and Thr-164. The active-site Proton acceptor is Lys-166. Lys-168 contacts substrate. Mg(2+) is bound by residues Lys-192, Asp-194, and Glu-195. Lys-192 bears the N6-carboxylysine mark. His-285 acts as the Proton acceptor in catalysis. The substrate site is built by Arg-286, His-318, and Ser-370.

It belongs to the RuBisCO large chain family. Type I subfamily. Heterohexadecamer of 8 large chains and 8 small chains; disulfide-linked. The disulfide link is formed within the large subunit homodimers. Mg(2+) serves as cofactor. Post-translationally, the disulfide bond which can form in the large chain dimeric partners within the hexadecamer appears to be associated with oxidative stress and protein turnover.

It localises to the plastid. The protein localises to the chloroplast. It carries out the reaction 2 (2R)-3-phosphoglycerate + 2 H(+) = D-ribulose 1,5-bisphosphate + CO2 + H2O. The catalysed reaction is D-ribulose 1,5-bisphosphate + O2 = 2-phosphoglycolate + (2R)-3-phosphoglycerate + 2 H(+). Its function is as follows. RuBisCO catalyzes two reactions: the carboxylation of D-ribulose 1,5-bisphosphate, the primary event in carbon dioxide fixation, as well as the oxidative fragmentation of the pentose substrate in the photorespiration process. Both reactions occur simultaneously and in competition at the same active site. The polypeptide is Ribulose bisphosphate carboxylase large chain (Caltha palustris (Yellow marsh marigold)).